A 257-amino-acid chain; its full sequence is ATP synthase subunit a (257 aa).

A run of 6 helical transmembrane segments spans residues 34-54 (ITNI…FSIL), 93-113 (YFPF…IGMV), 122-142 (HFIL…VLGF), 149-169 (FFSL…LVLI), 187-207 (ANIL…YNIM), and 210-230 (GIIF…FSGL).

This sequence belongs to the ATPase A chain family. In terms of assembly, F-type ATPases have 2 components, CF(1) - the catalytic core - and CF(0) - the membrane proton channel. CF(1) has five subunits: alpha(3), beta(3), gamma(1), delta(1), epsilon(1). CF(0) has three main subunits: a, b and c.

It is found in the mitochondrion inner membrane. Functionally, mitochondrial membrane ATP synthase (F(1)F(0) ATP synthase or Complex V) produces ATP from ADP in the presence of a proton gradient across the membrane which is generated by electron transport complexes of the respiratory chain. F-type ATPases consist of two structural domains, F(1) - containing the extramembraneous catalytic core and F(0) - containing the membrane proton channel, linked together by a central stalk and a peripheral stalk. During catalysis, ATP synthesis in the catalytic domain of F(1) is coupled via a rotary mechanism of the central stalk subunits to proton translocation. Key component of the proton channel; it may play a direct role in the translocation of protons across the membrane. The sequence is that of ATP synthase subunit a (ATP6) from Cochliobolus heterostrophus (Southern corn leaf blight fungus).